The following is a 162-amino-acid chain: Ribonuclease P protein component (162 aa).

Residues 1 to 62 are disordered; that stretch reads MDEKDLATQP…GPPKAGGRLL (62 aa). A compositionally biased stretch (basic and acidic residues) spans 21-36; sequence GPHEDPRRQERAEAQA.

It belongs to the RnpA family. As to quaternary structure, consists of a catalytic RNA component (M1 or rnpB) and a protein subunit.

The catalysed reaction is Endonucleolytic cleavage of RNA, removing 5'-extranucleotides from tRNA precursor.. RNaseP catalyzes the removal of the 5'-leader sequence from pre-tRNA to produce the mature 5'-terminus. It can also cleave other RNA substrates such as 4.5S RNA. The protein component plays an auxiliary but essential role in vivo by binding to the 5'-leader sequence and broadening the substrate specificity of the ribozyme. The chain is Ribonuclease P protein component from Thermus aquaticus.